The sequence spans 247 residues: Triosephosphate isomerase (247 aa).

Residues Asn10 and Lys12 each coordinate substrate. The Electrophile role is filled by His95. The active-site Proton acceptor is Glu165.

Belongs to the triosephosphate isomerase family. As to quaternary structure, homodimer.

It carries out the reaction D-glyceraldehyde 3-phosphate = dihydroxyacetone phosphate. The protein operates within carbohydrate biosynthesis; gluconeogenesis. Its pathway is carbohydrate degradation; glycolysis; D-glyceraldehyde 3-phosphate from glycerone phosphate: step 1/1. This chain is Triosephosphate isomerase (TPI1), found in Yarrowia lipolytica (strain CLIB 122 / E 150) (Yeast).